Consider the following 60-residue polypeptide: uncharacterized protein (60 aa).

This is an uncharacterized protein from Bacillus subtilis (strain 168).